The chain runs to 562 residues: Probable sesquiterpene synthase (562 aa).

Mg(2+) contacts are provided by aspartate 315, aspartate 319, and glutamate 467. Residues 315 to 319 (DDIYD) carry the DDXXD motif motif.

It belongs to the terpene synthase family. Tpsa subfamily. Mg(2+) serves as cofactor. The cofactor is Mn(2+).

Functionally, sesquiterpene synthase. This chain is Probable sesquiterpene synthase (SesquiTPS), found in Santalum austrocaledonicum (Sandalwood).